The primary structure comprises 255 residues: 4-hydroxy-tetrahydrodipicolinate reductase (255 aa).

NAD(+)-binding positions include 9–14 (GFKGKM), aspartate 35, 89–91 (GTT), and 115–118 (APNF). The Proton donor/acceptor role is filled by histidine 145. Histidine 146 is a binding site for (S)-2,3,4,5-tetrahydrodipicolinate. Lysine 149 serves as the catalytic Proton donor. 155-156 (GT) is a binding site for (S)-2,3,4,5-tetrahydrodipicolinate.

Belongs to the DapB family.

The protein localises to the cytoplasm. It catalyses the reaction (S)-2,3,4,5-tetrahydrodipicolinate + NAD(+) + H2O = (2S,4S)-4-hydroxy-2,3,4,5-tetrahydrodipicolinate + NADH + H(+). The catalysed reaction is (S)-2,3,4,5-tetrahydrodipicolinate + NADP(+) + H2O = (2S,4S)-4-hydroxy-2,3,4,5-tetrahydrodipicolinate + NADPH + H(+). Its pathway is amino-acid biosynthesis; L-lysine biosynthesis via DAP pathway; (S)-tetrahydrodipicolinate from L-aspartate: step 4/4. Its function is as follows. Catalyzes the conversion of 4-hydroxy-tetrahydrodipicolinate (HTPA) to tetrahydrodipicolinate. The sequence is that of 4-hydroxy-tetrahydrodipicolinate reductase from Streptococcus pneumoniae serotype 19F (strain G54).